The primary structure comprises 642 residues: Threonine--tRNA ligase (642 aa).

The region spanning 1–61 (MPVITLPDGS…ETDSELSIIT (61 aa)) is the TGS domain. The segment at 243–534 (DHRKIGKQLD…LIEEYAGKFP (292 aa)) is catalytic. Residues Cys334, His385, and His511 each contribute to the Zn(2+) site.

It belongs to the class-II aminoacyl-tRNA synthetase family. As to quaternary structure, homodimer. It depends on Zn(2+) as a cofactor.

It localises to the cytoplasm. It carries out the reaction tRNA(Thr) + L-threonine + ATP = L-threonyl-tRNA(Thr) + AMP + diphosphate + H(+). Catalyzes the attachment of threonine to tRNA(Thr) in a two-step reaction: L-threonine is first activated by ATP to form Thr-AMP and then transferred to the acceptor end of tRNA(Thr). Also edits incorrectly charged L-seryl-tRNA(Thr). The polypeptide is Threonine--tRNA ligase (Shewanella halifaxensis (strain HAW-EB4)).